A 62-amino-acid polypeptide reads, in one-letter code: Small polypeptide DEVIL 17 (62 aa).

Positions 27–58 are required for DVL/RTFL small polypeptide activity; the sequence is RRNKGCLAMVKERRSRFYIARRCILMLLCWHK. Residues 39–56 form a helical membrane-spanning segment; it reads RRSRFYIARRCILMLLCW.

This sequence belongs to the DVL/RTFL small polypeptides family.

The protein localises to the cell membrane. Its function is as follows. Small polypeptide acting as a regulatory molecule which coordinates cellular responses required for differentiation, growth and development, probably by restricting polar cell proliferation in lateral organs and coordinating socket cell recruitment and differentiation at trichome sites. The protein is Small polypeptide DEVIL 17 of Arabidopsis thaliana (Mouse-ear cress).